A 713-amino-acid polypeptide reads, in one-letter code: Polyphosphate kinase (713 aa).

Asn63 contacts ATP. Arg394 and Arg424 together coordinate Mg(2+). His454 serves as the catalytic Phosphohistidine intermediate. ATP is bound by residues Tyr487, Arg583, and His611.

It belongs to the polyphosphate kinase 1 (PPK1) family. Mg(2+) serves as cofactor. Post-translationally, an intermediate of this reaction is the autophosphorylated ppk in which a phosphate is covalently linked to a histidine residue through a N-P bond.

It carries out the reaction [phosphate](n) + ATP = [phosphate](n+1) + ADP. In terms of biological role, catalyzes the reversible transfer of the terminal phosphate of ATP to form a long-chain polyphosphate (polyP). In Prosthecochloris aestuarii (strain DSM 271 / SK 413), this protein is Polyphosphate kinase.